A 593-amino-acid chain; its full sequence is Polyphenol oxidase, chloroplastic (593 aa).

A compositionally biased stretch (low complexity) spans methionine 1–threonine 13. Residues methionine 1–leucine 34 are disordered. The transit peptide at methionine 1–alanine 89 directs the protein to the chloroplast. Over residues proline 24–leucine 34 the composition is skewed to polar residues. Intrachain disulfides connect cysteine 100-cysteine 115 and cysteine 114-cysteine 176. 6 residues coordinate Cu cation: histidine 175, histidine 196, histidine 205, histidine 327, histidine 331, and histidine 361. The 2'-(S-cysteinyl)-histidine (Cys-His) cross-link spans cysteine 179–histidine 196.

This sequence belongs to the tyrosinase family. The cofactor is Cu(2+).

The protein resides in the plastid. Its subcellular location is the chloroplast thylakoid lumen. The catalysed reaction is 2 catechol + O2 = 2 1,2-benzoquinone + 2 H2O. Its function is as follows. Catalyzes the oxidation of mono- and o-diphenols to o-diquinones. This is Polyphenol oxidase, chloroplastic from Malus domestica (Apple).